The following is a 421-amino-acid chain: Probable dual-specificity RNA methyltransferase RlmN (421 aa).

A disordered region spans residues Met1–Val23. The Proton acceptor role is filled by Glu127. The Radical SAM core domain occupies Tyr133–Arg372. Cysteines 140 and 378 form a disulfide. [4Fe-4S] cluster is bound by residues Cys147, Cys151, and Cys154. S-adenosyl-L-methionine contacts are provided by residues Gly202 to Glu203, Ser236, Ser259 to His261, and Asn335. Cys378 serves as the catalytic S-methylcysteine intermediate. The disordered stretch occupies residues Ala383–Arg421. The span at Gly387 to Glu396 shows a compositional bias: basic and acidic residues.

It belongs to the radical SAM superfamily. RlmN family. [4Fe-4S] cluster is required as a cofactor.

The protein localises to the cytoplasm. It carries out the reaction adenosine(2503) in 23S rRNA + 2 reduced [2Fe-2S]-[ferredoxin] + 2 S-adenosyl-L-methionine = 2-methyladenosine(2503) in 23S rRNA + 5'-deoxyadenosine + L-methionine + 2 oxidized [2Fe-2S]-[ferredoxin] + S-adenosyl-L-homocysteine. It catalyses the reaction adenosine(37) in tRNA + 2 reduced [2Fe-2S]-[ferredoxin] + 2 S-adenosyl-L-methionine = 2-methyladenosine(37) in tRNA + 5'-deoxyadenosine + L-methionine + 2 oxidized [2Fe-2S]-[ferredoxin] + S-adenosyl-L-homocysteine. Its function is as follows. Specifically methylates position 2 of adenine 2503 in 23S rRNA and position 2 of adenine 37 in tRNAs. This is Probable dual-specificity RNA methyltransferase RlmN from Frankia casuarinae (strain DSM 45818 / CECT 9043 / HFP020203 / CcI3).